The sequence spans 332 residues: DNA-directed RNA polymerase subunit alpha (332 aa).

Residues Met1–Thr234 are alpha N-terminal domain (alpha-NTD). Residues Val248–Gly332 form an alpha C-terminal domain (alpha-CTD) region.

This sequence belongs to the RNA polymerase alpha chain family. Homodimer. The RNAP catalytic core consists of 2 alpha, 1 beta, 1 beta' and 1 omega subunit. When a sigma factor is associated with the core the holoenzyme is formed, which can initiate transcription.

The enzyme catalyses RNA(n) + a ribonucleoside 5'-triphosphate = RNA(n+1) + diphosphate. Functionally, DNA-dependent RNA polymerase catalyzes the transcription of DNA into RNA using the four ribonucleoside triphosphates as substrates. This is DNA-directed RNA polymerase subunit alpha from Stenotrophomonas maltophilia (strain R551-3).